A 71-amino-acid polypeptide reads, in one-letter code: BBSome-interacting protein 1 (71 aa).

The protein belongs to the BBIP10 family.

The protein localises to the cell projection. It localises to the cilium. Its subcellular location is the cytoplasm. In terms of biological role, required for primary cilia assembly. The protein is BBSome-interacting protein 1 (bbip1) of Nematostella vectensis (Starlet sea anemone).